The primary structure comprises 202 residues: Endothelin-1 (202 aa).

Residues 1-25 form the signal peptide; sequence MDYFPMIFALLFVAFQGAPEAAVLG. A propeptide spanning residues 26–50 is cleaved from the precursor; the sequence is TELSTGAESGGERPVPTTPWRPRRS. The segment at 29–48 is disordered; the sequence is STGAESGGERPVPTTPWRPR. Intrachain disulfides connect Cys-53–Cys-67 and Cys-55–Cys-63. A propeptide spanning residues 74–202 is cleaved from the precursor; the sequence is VNTPEHVVPY…DKKVIYSRAH (129 aa). Positions 110-124 are endothelin-like; it reads CQCASQTDKKCQNFC.

It belongs to the endothelin/sarafotoxin family.

It localises to the secreted. Endothelins are endothelium-derived vasoconstrictor peptides. Probable ligand for G-protein coupled receptors EDNRA and EDNRB which activates PTK2B, BCAR1, BCAR3 and, GTPases RAP1 and RHOA cascade in glomerular mesangial cells. Also binds the DEAR/FBXW7-AS1 receptor. Promotes mesenteric arterial wall remodeling via activation of ROCK signaling and subsequent colocalization of NFATC3 with F-actin filaments. NFATC3 then translocates to the nucleus where it subsequently promotes the transcription of the smooth muscle hypertrophy and differentiation marker ACTA2. This chain is Endothelin-1 (EDN1), found in Ovis aries (Sheep).